A 112-amino-acid polypeptide reads, in one-letter code: Integration host factor subunit alpha (112 aa).

Belongs to the bacterial histone-like protein family. In terms of assembly, heterodimer of an alpha and a beta chain.

Functionally, this protein is one of the two subunits of integration host factor, a specific DNA-binding protein that functions in genetic recombination as well as in transcriptional and translational control. This is Integration host factor subunit alpha from Rhizobium etli (strain CIAT 652).